The following is a 54-amino-acid chain: UPF0391 membrane protein Daro_2080 (54 aa).

Helical transmembrane passes span 5–25 and 30–50; these read AIVF…GIAA and IAKI…VMGF.

Belongs to the UPF0391 family.

The protein resides in the cell membrane. This Dechloromonas aromatica (strain RCB) protein is UPF0391 membrane protein Daro_2080.